We begin with the raw amino-acid sequence, 309 residues long: HPr kinase/phosphorylase (309 aa).

Residues His138 and Lys159 contribute to the active site. 153–160 (GQSGVGKS) is an ATP binding site. Ser160 contacts Mg(2+). Asp177 (proton acceptor; for phosphorylation activity. Proton donor; for dephosphorylation activity) is an active-site residue. Positions 201–210 (LEIRGLGIIN) are important for the catalytic mechanism of both phosphorylation and dephosphorylation. Residue Glu202 participates in Mg(2+) binding. Residue Arg243 is part of the active site. Residues 264–269 (PVRPGR) form an important for the catalytic mechanism of dephosphorylation region.

This sequence belongs to the HPrK/P family. Homohexamer. Mg(2+) serves as cofactor.

The catalysed reaction is [HPr protein]-L-serine + ATP = [HPr protein]-O-phospho-L-serine + ADP + H(+). It carries out the reaction [HPr protein]-O-phospho-L-serine + phosphate + H(+) = [HPr protein]-L-serine + diphosphate. Its function is as follows. Catalyzes the ATP- as well as the pyrophosphate-dependent phosphorylation of a specific serine residue in HPr, a phosphocarrier protein of the phosphoenolpyruvate-dependent sugar phosphotransferase system (PTS). HprK/P also catalyzes the pyrophosphate-producing, inorganic phosphate-dependent dephosphorylation (phosphorolysis) of seryl-phosphorylated HPr (P-Ser-HPr). The two antagonistic activities of HprK/P are regulated by several intracellular metabolites, which change their concentration in response to the absence or presence of rapidly metabolisable carbon sources (glucose, fructose, etc.) in the growth medium. Also phosphorylates/dephosphorylates the HPr-like catabolite repression protein crh on a specific serine residue. Therefore, by controlling the phosphorylation state of HPr and crh, HPrK/P is a sensor enzyme that plays a major role in the regulation of carbon metabolism and sugar transport: it mediates carbon catabolite repression (CCR), and regulates PTS-catalyzed carbohydrate uptake and inducer exclusion. The protein is HPr kinase/phosphorylase of Bacillus cereus (strain AH820).